The primary structure comprises 544 residues: Glycoprotein gp100 (544 aa).

The first 19 residues, 1-19 (MKNFILLVFLFLLVSNSLG), serve as a signal peptide directing secretion. Over 20-489 (KSNKKDDQSP…SGGGGNKKLY (470 aa)) the chain is Extracellular. The N-linked (GlcNAc...) asparagine glycan is linked to Asn80. Polar residues predominate over residues 84–99 (EPQNNPIPTVSINPDQ). Positions 84-215 (EPQNNPIPTV…TPTRPSSSVS (132 aa)) are disordered. Low complexity-rich tracts occupy residues 126–142 (SKPT…TIPP), 150–165 (PQTT…TPTP), and 189–199 (PKPTKSSKPTK). Asn224, Asn308, Asn332, Asn366, Asn380, Asn410, Asn422, and Asn478 each carry an N-linked (GlcNAc...) asparagine glycan. Positions 444 to 480 (KPSTTDDDNNKNNDDGDSEIDSVGKSAVDSSKSNNNS) are disordered. Residues 490–510 (LLIILPTVLFIIVAALVAIFI) traverse the membrane as a helical segment. The Cytoplasmic segment spans residues 511 to 544 (KTRVSQNSGSKVNKNNNKKDSINVPFQMLDEITT).

Post-translationally, N- and O-glycosylated.

It localises to the membrane. The protein is Glycoprotein gp100 (gppA) of Dictyostelium discoideum (Social amoeba).